We begin with the raw amino-acid sequence, 163 residues long: Large ribosomal subunit protein uL18 (163 aa).

Belongs to the universal ribosomal protein uL18 family. In terms of assembly, part of the 50S ribosomal subunit. Contacts the 5S and 23S rRNAs.

In terms of biological role, this is one of the proteins that bind and probably mediate the attachment of the 5S RNA into the large ribosomal subunit, where it forms part of the central protuberance. This Thermoplasma acidophilum (strain ATCC 25905 / DSM 1728 / JCM 9062 / NBRC 15155 / AMRC-C165) protein is Large ribosomal subunit protein uL18.